Reading from the N-terminus, the 508-residue chain is Photosystem II CP47 reaction center protein (508 aa).

The next 6 helical transmembrane spans lie at 21–36 (AVHI…WAGS), 101–115 (IVFS…IWHW), 140–156 (GIHL…FGAF), 203–218 (IAAG…FHLS), 237–252 (VLSS…AFVV), and 457–472 (TFAL…HGAR).

It belongs to the PsbB/PsbC family. PsbB subfamily. As to quaternary structure, PSII is composed of 1 copy each of membrane proteins PsbA, PsbB, PsbC, PsbD, PsbE, PsbF, PsbH, PsbI, PsbJ, PsbK, PsbL, PsbM, PsbT, PsbX, PsbY, PsbZ, Psb30/Ycf12, at least 3 peripheral proteins of the oxygen-evolving complex and a large number of cofactors. It forms dimeric complexes. Requires Binds multiple chlorophylls. PSII binds additional chlorophylls, carotenoids and specific lipids. as cofactor.

The protein resides in the plastid. The protein localises to the chloroplast thylakoid membrane. In terms of biological role, one of the components of the core complex of photosystem II (PSII). It binds chlorophyll and helps catalyze the primary light-induced photochemical processes of PSII. PSII is a light-driven water:plastoquinone oxidoreductase, using light energy to abstract electrons from H(2)O, generating O(2) and a proton gradient subsequently used for ATP formation. This is Photosystem II CP47 reaction center protein from Triticum aestivum (Wheat).